We begin with the raw amino-acid sequence, 299 residues long: Taste receptor type 2 member 16 (299 aa).

Over 1–5 (MVPTQ) the chain is Extracellular. Residues 6–26 (VTIFSIIMYVLESLVIIVQSC) traverse the membrane as a helical segment. Residues 27–44 (TTVAVLFREWMHFQRLSP) are Cytoplasmic-facing. The chain crosses the membrane as a helical span at residues 45-65 (VEIILISLGISHFCLQWTSML). The Extracellular segment spans residues 66 to 82 (YNFGTYSRPVLLFWKVS). Residues 83–103 (VVWEFMNVLTFWLTSLLAVLY) form a helical membrane-spanning segment. The Cytoplasmic portion of the chain corresponds to 104 to 125 (CVKVSSFSHPVFLWLRLKILKL). A helical transmembrane segment spans residues 126–146 (VLWLLLGALIASCLSIIPSVV). The Extracellular portion of the chain corresponds to 147-183 (KYHIQMELLTLDHLPKNSSLILRLQMFEWYFSNPFKM). An N-linked (GlcNAc...) asparagine glycan is attached at Asn163. Residues 184-204 (IGFGVPFLVFLISIILLTVSL) traverse the membrane as a helical segment. The Cytoplasmic portion of the chain corresponds to 205-233 (VQHWGQMKHYSSSSSSLRAQCTVLKSLAT). The helical transmembrane segment at 234–254 (FFIFFTSYFLTIVVSFIGTVF) threads the bilayer. Over 255–258 (DKKS) the chain is Extracellular. Residues 259–279 (WFWVCEAVIYGLVCIHFTSLM) traverse the membrane as a helical segment. Topologically, residues 280 to 299 (MSNPTLKKALRLQFWSPESS) are cytoplasmic.

It belongs to the G-protein coupled receptor T2R family. Interacts with RTP3 and RTP4. As to expression, expressed in subsets of taste receptor cells of the tongue and palate epithelium and exclusively in gustducin-positive cells. Expressed in the antrum and fundus (part of the stomach), duodenum and in gastric endocrine cells.

It localises to the cell membrane. Its function is as follows. Gustducin-coupled receptor implicated in the perception of bitter compounds in the oral cavity and the gastrointestinal tract. Signals through PLCB2 and the calcium-regulated cation channel TRPM5. The sequence is that of Taste receptor type 2 member 16 (Tas2r16) from Rattus norvegicus (Rat).